The following is a 312-amino-acid chain: Ribosomal RNA small subunit methyltransferase H (312 aa).

S-adenosyl-L-methionine contacts are provided by residues 35-37, Asp-55, Phe-79, Asp-101, and Gln-108; that span reads GGH.

Belongs to the methyltransferase superfamily. RsmH family.

The protein resides in the cytoplasm. The enzyme catalyses cytidine(1402) in 16S rRNA + S-adenosyl-L-methionine = N(4)-methylcytidine(1402) in 16S rRNA + S-adenosyl-L-homocysteine + H(+). Functionally, specifically methylates the N4 position of cytidine in position 1402 (C1402) of 16S rRNA. The protein is Ribosomal RNA small subunit methyltransferase H of Glaesserella parasuis serovar 5 (strain SH0165) (Haemophilus parasuis).